The chain runs to 292 residues: Acetyl-coenzyme A carboxylase carboxyl transferase subunit beta (292 aa).

Residues 36 to 292 (MWSKCEKCAK…LLRMHEVDYE (257 aa)) form the CoA carboxyltransferase N-terminal domain. The Zn(2+) site is built by cysteine 40, cysteine 43, cysteine 59, and cysteine 62. The segment at 40 to 62 (CEKCAKILYTEDLRENFNVCPNC) adopts a C4-type zinc-finger fold.

It belongs to the AccD/PCCB family. As to quaternary structure, acetyl-CoA carboxylase is a heterohexamer composed of biotin carboxyl carrier protein (AccB), biotin carboxylase (AccC) and two subunits each of ACCase subunit alpha (AccA) and ACCase subunit beta (AccD). Requires Zn(2+) as cofactor.

The protein localises to the cytoplasm. The enzyme catalyses N(6)-carboxybiotinyl-L-lysyl-[protein] + acetyl-CoA = N(6)-biotinyl-L-lysyl-[protein] + malonyl-CoA. Its pathway is lipid metabolism; malonyl-CoA biosynthesis; malonyl-CoA from acetyl-CoA: step 1/1. In terms of biological role, component of the acetyl coenzyme A carboxylase (ACC) complex. Biotin carboxylase (BC) catalyzes the carboxylation of biotin on its carrier protein (BCCP) and then the CO(2) group is transferred by the transcarboxylase to acetyl-CoA to form malonyl-CoA. The protein is Acetyl-coenzyme A carboxylase carboxyl transferase subunit beta of Clostridium perfringens (strain ATCC 13124 / DSM 756 / JCM 1290 / NCIMB 6125 / NCTC 8237 / Type A).